Consider the following 123-residue polypeptide: Small ribosomal subunit protein uS13 (123 aa).

A disordered region spans residues 94–123; sequence GLPVRGQSTKSNARTRKGPRKTVAGKKSTK. The span at 106–123 shows a compositional bias: basic residues; it reads ARTRKGPRKTVAGKKSTK.

The protein belongs to the universal ribosomal protein uS13 family. In terms of assembly, part of the 30S ribosomal subunit. Forms a loose heterodimer with protein S19. Forms two bridges to the 50S subunit in the 70S ribosome.

Its function is as follows. Located at the top of the head of the 30S subunit, it contacts several helices of the 16S rRNA. In the 70S ribosome it contacts the 23S rRNA (bridge B1a) and protein L5 of the 50S subunit (bridge B1b), connecting the 2 subunits; these bridges are implicated in subunit movement. Contacts the tRNAs in the A and P-sites. The chain is Small ribosomal subunit protein uS13 from Mycoplasmopsis agalactiae (strain NCTC 10123 / CIP 59.7 / PG2) (Mycoplasma agalactiae).